The primary structure comprises 404 residues: F-box only protein 12 (404 aa).

The region spanning 1-44 (MKNSIPIDLIYEILSRLPAKSVARCRCVSKRWRSILRHQVFTEL) is the F-box domain. The chain crosses the membrane as a helical span at residues 383–403 (LAILFCLFFLLFNYLIRLCWV).

The protein localises to the membrane. The chain is F-box only protein 12 (FBX12) from Arabidopsis thaliana (Mouse-ear cress).